Consider the following 1130-residue polypeptide: Transmembrane channel-like protein 3 (1130 aa).

Over 1-148 (MKTSKASQRY…ASYFIFLRWL (148 aa)) the chain is Cytoplasmic. A helical transmembrane segment spans residues 149–169 (FGINIVLTVMTGAFVVLPELI). The Extracellular segment spans residues 170–192 (AGQPFGSTASKTIPREQITSAQD). Residues 193–213 (LDTVWSLGGYLQYSVLFYGYY) form a helical membrane-spanning segment. The Cytoplasmic portion of the chain corresponds to 214 to 225 (GRERRIGRAGYR). The helical transmembrane segment at 226-246 (LPLAYFLVGMAVFAYSFIVLL) threads the bilayer. Residues 247–319 (KRMAKNSRTS…KNMAVTVCLR (73 aa)) lie on the Extracellular side of the membrane. Asn264 carries an N-linked (GlcNAc...) asparagine glycan. Residues 320-340 (IIANILVLLSLAGSIYLIYFV) form a helical membrane-spanning segment. Topologically, residues 341–361 (VDRSQKLEQSKKELTLWEKNE) are cytoplasmic. The chain crosses the membrane as a helical span at residues 362 to 382 (VSVVVSLVTMLAPSAFDLIAA). Over 383–393 (LEMYHPRTTLR) the chain is Extracellular. A helical transmembrane segment spans residues 394-414 (FQLARVLVLYLGNLYSLIIAL). At 415–509 (LDKVNSMNIE…CWETYVGQEM (95 aa)) the chain is on the cytoplasmic side. Residues 510 to 530 (LKLSVIDMLFTVASILLIDFF) form a helical membrane-spanning segment. Residues 531 to 570 (RGLFVRYLSDYWCWDLESKFPEYGEFKIAENVLHLVYNQG) are Extracellular-facing. A helical transmembrane segment spans residues 571–591 (MIWMGAFFSPCLPAFNVLKLI). The Cytoplasmic segment spans residues 592–619 (GLMYLRSWAVLTCNVPHQQVFRASRSNN). A helical membrane pass occupies residues 620-640 (FYLAMLLFMLFLCMLPTIFAI). Residues 641 to 680 (VHYKPSLNCGPFSGQEKIYDIVSETIENDFPTWFHAVVGH) are Extracellular-facing. The helical transmembrane segment at 681–701 (ISSPVVILPAVLLLFMLIYYL) threads the bilayer. The Cytoplasmic portion of the chain corresponds to 702-1130 (QSIARSLKLS…DLNDLICSNV (429 aa)). Disordered regions lie at residues 742–774 (DARQ…EESS), 819–893 (RSLP…FQPI), 999–1019 (SSCF…KYQR), 1033–1059 (QLER…LKAR), and 1097–1116 (QGRF…KSRQ). A compositionally biased stretch (polar residues) spans 747 to 767 (GSATEAESSENSKPKTLQARI). The segment covering 840–850 (SRSRPEQDTNR) has biased composition (basic and acidic residues). A compositionally biased stretch (polar residues) spans 856–876 (CSSTSNLHKNRSCSSVTQTQP). Composition is skewed to basic and acidic residues over residues 878–890 (KDVR…RKDF) and 1006–1017 (DRSENNTRDPKY). Residues 1097-1106 (QGRFPRSASQ) show a composition bias toward polar residues.

This sequence belongs to the TMC family. As to expression, detected in most neuronal organs and also in some non-neuronal tissues.

It localises to the membrane. Functionally, probable component of an ion channel. Molecular function hasn't been characterized yet. In Mus musculus (Mouse), this protein is Transmembrane channel-like protein 3.